Reading from the N-terminus, the 304-residue chain is Deoxyribonuclease-1-like 1 (304 aa).

Positions 1–24 (MPYMAMHGLTVALLLIFLAGGTEA) are cleaved as a signal peptide. Residue asparagine 92 is glycosylated (N-linked (GlcNAc...) asparagine). Glutamate 103 is a catalytic residue. Asparagine 123 carries an N-linked (GlcNAc...) asparagine glycan. Histidine 154 is a catalytic residue. Cysteine 193 and cysteine 230 form a disulfide bridge. The N-linked (GlcNAc...) asparagine glycan is linked to asparagine 229.

Belongs to the DNase I family.

The protein resides in the endoplasmic reticulum. This chain is Deoxyribonuclease-1-like 1 (DNASE1L1), found in Cricetulus griseus (Chinese hamster).